Consider the following 205-residue polypeptide: Ribosomal RNA large subunit methyltransferase E (205 aa).

Residues Gly-60, Trp-62, Asp-80, Asp-96, and Asp-121 each coordinate S-adenosyl-L-methionine. The active-site Proton acceptor is Lys-161.

It belongs to the class I-like SAM-binding methyltransferase superfamily. RNA methyltransferase RlmE family.

The protein resides in the cytoplasm. The enzyme catalyses uridine(2552) in 23S rRNA + S-adenosyl-L-methionine = 2'-O-methyluridine(2552) in 23S rRNA + S-adenosyl-L-homocysteine + H(+). Specifically methylates the uridine in position 2552 of 23S rRNA at the 2'-O position of the ribose in the fully assembled 50S ribosomal subunit. The chain is Ribosomal RNA large subunit methyltransferase E from Chromobacterium violaceum (strain ATCC 12472 / DSM 30191 / JCM 1249 / CCUG 213 / NBRC 12614 / NCIMB 9131 / NCTC 9757 / MK).